The following is a 1113-amino-acid chain: uncharacterized protein (1113 aa).

313–320 (GPPGTGKS) contributes to the ATP binding site.

Belongs to the DNA2/NAM7 helicase family.

This is an uncharacterized protein from Mycoplasma genitalium (strain ATCC 33530 / DSM 19775 / NCTC 10195 / G37) (Mycoplasmoides genitalium).